The following is an 833-amino-acid chain: DNA ligase (833 aa).

NAD(+) is bound by residues 35–39, 84–85, and Glu115; these read DADYD and SL. The N6-AMP-lysine intermediate role is filled by Lys117. NAD(+) contacts are provided by Arg138, Glu175, Lys292, and Lys316. Positions 410, 413, 428, and 434 each coordinate Zn(2+). The BRCT domain maps to 750–833; that stretch reads LQTGPLDGQT…AFLGDHGQQP (84 aa).

It belongs to the NAD-dependent DNA ligase family. LigA subfamily. Mg(2+) is required as a cofactor. The cofactor is Mn(2+).

The catalysed reaction is NAD(+) + (deoxyribonucleotide)n-3'-hydroxyl + 5'-phospho-(deoxyribonucleotide)m = (deoxyribonucleotide)n+m + AMP + beta-nicotinamide D-nucleotide.. Its function is as follows. DNA ligase that catalyzes the formation of phosphodiester linkages between 5'-phosphoryl and 3'-hydroxyl groups in double-stranded DNA using NAD as a coenzyme and as the energy source for the reaction. It is essential for DNA replication and repair of damaged DNA. The polypeptide is DNA ligase (Xanthomonas euvesicatoria pv. vesicatoria (strain 85-10) (Xanthomonas campestris pv. vesicatoria)).